The following is a 469-amino-acid chain: Gamma-aminobutyric acid permease (469 aa).

At 1 to 17 (MNQSQSGLKKELKTRHM) the chain is on the cytoplasmic side. The chain crosses the membrane as a helical span at residues 18–38 (TMISIAGVIGAGLFVGSGSVI). Residue His-39 is a topological domain, extracellular. Residues 40–60 (STGPGAVVSYALAGLLVIFIM) form a helical membrane-spanning segment. The Cytoplasmic portion of the chain corresponds to 61 to 94 (RMLGEMSAVNPTSGSFSQYAHDAIGPWAGFTIGW). Residues 95–115 (LYWFFWVIVIAIEAIAGAGII) traverse the membrane as a helical segment. A topological domain (extracellular) is located at residue Gln-116. The helical transmembrane segment at 117-137 (YWFHDIPLWLTSLILTIVLTL) threads the bilayer. Topologically, residues 138 to 157 (TNVYSVKSFGEFEYWFSLIK) are cytoplasmic. A helical transmembrane segment spans residues 158–178 (VVTIIAFLIVGFAFIFGFAPG). Residues 179–200 (SEPVGFSNLTGKGGFFPEGISS) lie on the Extracellular side of the membrane. The chain crosses the membrane as a helical span at residues 201 to 221 (VLLGIVVVIFSFMGTEIVAIA). Topologically, residues 222-242 (AGETSNPIESVTKATRSVVWR) are cytoplasmic. A helical transmembrane segment spans residues 243–263 (IIVFYVGSIAIVVALLPWNSA). The Extracellular segment spans residues 264–269 (NILESP). The helical transmembrane segment at 270-290 (FVAVLEHIGVPAAAQIMNFIV) threads the bilayer. The Cytoplasmic segment spans residues 291–328 (LTAVLSCLNSGLYTTSRMLYSLAERNEAPRRFMKLSKK). A helical transmembrane segment spans residues 329–349 (GVPVQAIVAGTFFSYIAVVMN). Residues 350-355 (YFSPDT) lie on the Extracellular side of the membrane. The helical transmembrane segment at 356 to 376 (VFLFLVNSSGAIALLVYLVIA) threads the bilayer. At 377–401 (VSQLKMRKKLEKTNPEALKIKMWLF) the chain is on the cytoplasmic side. The helical transmembrane segment at 402-422 (PFLTYLTIIAICGILVSMAFI) threads the bilayer. Residues 423 to 425 (DSM) lie on the Extracellular side of the membrane. A helical membrane pass occupies residues 426–446 (RDELLLTGVITGIVLISYLVF). At 447-469 (RKRKVSEKAAANPVTQQQPDILP) the chain is on the cytoplasmic side.

It belongs to the amino acid-polyamine-organocation (APC) superfamily. Amino acid transporter (AAT) (TC 2.A.3.1) family.

It is found in the cell membrane. It catalyses the reaction 4-aminobutanoate(in) + H(+)(in) = 4-aminobutanoate(out) + H(+)(out). The enzyme catalyses beta-alanine(in) + H(+)(in) = beta-alanine(out) + H(+)(out). The protein operates within amino-acid degradation; 4-aminobutanoate degradation. In terms of biological role, transporter for gamma-aminobutyrate (GABA). Can also transport beta-alanine. Can translocate several open-chain GABA analogs (3-aminobutyrate, 3-aminopropanoate, cis-4-aminobutenoate) across the membrane via counterflow against GABA, but cannot transport muscimol. Also functions as a low-affinity proline importer. The polypeptide is Gamma-aminobutyric acid permease (Bacillus subtilis (strain 168)).